The chain runs to 518 residues: MFKIMKDFTEQEKIIVLDFGSQYNQLITRRIREFGVYSELHPHTITVEEMKALNPTGIIFSGGPNSVYDEDAFRADERIFDMGIPILGICYGMQLMTTHFGGKVERAKDREYGKADIHVENPSRLFAGLPTDQVVWMSHGDLVVEEPAGFEVTATSKSCPIAGIADEDRLLYGVQFHPEVRHSAYGNELLKNFALNICGCKGDWTMENFSEVEIAKIQEIVGDKKVLLALSGGVDSSVVGVLIHKAIGDQLTCIFVDHGLLRKGEADQVMATLQGEFNMNIIKVDAKKRFMDKLAGVSDPEQKRKIIGNEFIYVFDDEANKLDGVEFLAQGTLYTDIIESGTATAQTIKSHHNVGGLPEDMQFKLIEPLNTLFKDEVRALGTELGMPDAIVWRQPFPGPGLGIRVLGEITEEKLEIVRDSDYILREEIKNAGLEREIWQYFTALPNIRSVGVMGDGRTYDHTVVVRAVTSIDGMTADWARIPWDVLEKISVRIVNEVDHVNRVVYDITSKPPATVEWE.

The Glutamine amidotransferase type-1 domain occupies 13–203; sequence KIIVLDFGSQ…ALNICGCKGD (191 aa). Cysteine 90 (nucleophile) is an active-site residue. Residues histidine 177 and glutamate 179 contribute to the active site. A GMPS ATP-PPase domain is found at 204 to 393; it reads WTMENFSEVE…LGMPDAIVWR (190 aa). 231–237 provides a ligand contact to ATP; the sequence is SGGVDSS.

In terms of assembly, homodimer.

The enzyme catalyses XMP + L-glutamine + ATP + H2O = GMP + L-glutamate + AMP + diphosphate + 2 H(+). It functions in the pathway purine metabolism; GMP biosynthesis; GMP from XMP (L-Gln route): step 1/1. In terms of biological role, catalyzes the synthesis of GMP from XMP. The chain is GMP synthase [glutamine-hydrolyzing] from Listeria innocua serovar 6a (strain ATCC BAA-680 / CLIP 11262).